A 715-amino-acid polypeptide reads, in one-letter code: Fatty acid oxidation complex subunit alpha (715 aa).

The enoyl-CoA hydratase/isomerase stretch occupies residues 1-189 (MIYQGETLTV…KVGAIDAVVA (189 aa)). D296 provides a ligand contact to substrate. Positions 311-715 (AKATSHAAVL…EMAAQGKTFY (405 aa)) are 3-hydroxyacyl-CoA dehydrogenase. Residues M325, D344, 401 to 403 (VVE), K408, and S430 contribute to the NAD(+) site. H451 acts as the For 3-hydroxyacyl-CoA dehydrogenase activity in catalysis. N454 contacts NAD(+). Substrate is bound by residues N501 and Y661.

It in the N-terminal section; belongs to the enoyl-CoA hydratase/isomerase family. In the C-terminal section; belongs to the 3-hydroxyacyl-CoA dehydrogenase family. Heterotetramer of two alpha chains (FadB) and two beta chains (FadA).

It carries out the reaction a (3S)-3-hydroxyacyl-CoA + NAD(+) = a 3-oxoacyl-CoA + NADH + H(+). The catalysed reaction is a (3S)-3-hydroxyacyl-CoA = a (2E)-enoyl-CoA + H2O. It catalyses the reaction a 4-saturated-(3S)-3-hydroxyacyl-CoA = a (3E)-enoyl-CoA + H2O. The enzyme catalyses (3S)-3-hydroxybutanoyl-CoA = (3R)-3-hydroxybutanoyl-CoA. It carries out the reaction a (3Z)-enoyl-CoA = a 4-saturated (2E)-enoyl-CoA. The catalysed reaction is a (3E)-enoyl-CoA = a 4-saturated (2E)-enoyl-CoA. Its pathway is lipid metabolism; fatty acid beta-oxidation. In terms of biological role, involved in the aerobic and anaerobic degradation of long-chain fatty acids via beta-oxidation cycle. Catalyzes the formation of 3-oxoacyl-CoA from enoyl-CoA via L-3-hydroxyacyl-CoA. It can also use D-3-hydroxyacyl-CoA and cis-3-enoyl-CoA as substrate. In Aeromonas hydrophila subsp. hydrophila (strain ATCC 7966 / DSM 30187 / BCRC 13018 / CCUG 14551 / JCM 1027 / KCTC 2358 / NCIMB 9240 / NCTC 8049), this protein is Fatty acid oxidation complex subunit alpha.